We begin with the raw amino-acid sequence, 543 residues long: CTP synthase (543 aa).

Residues 1–267 (MAKFVFVTGG…CREVLDVLNL (267 aa)) are amidoligase domain. Serine 13 lines the CTP pocket. Residue serine 13 coordinates UTP. 14 to 19 (SIGKGI) is a binding site for ATP. Tyrosine 54 is an L-glutamine binding site. Aspartate 71 serves as a coordination point for ATP. Aspartate 71 and glutamate 141 together coordinate Mg(2+). CTP is bound by residues 148-150 (DIE), 188-193 (KTKPTQ), and lysine 224. Residues 188-193 (KTKPTQ) and lysine 224 each bind UTP. In terms of domain architecture, Glutamine amidotransferase type-1 spans 292-534 (KVALVGKYVQ…IEAAQQRLPN (243 aa)). Residue glycine 354 coordinates L-glutamine. The active-site Nucleophile; for glutamine hydrolysis is the cysteine 381. L-glutamine contacts are provided by residues 382–385 (LGMQ), glutamate 405, and arginine 462. Catalysis depends on residues histidine 507 and glutamate 509.

It belongs to the CTP synthase family. Homotetramer.

It catalyses the reaction UTP + L-glutamine + ATP + H2O = CTP + L-glutamate + ADP + phosphate + 2 H(+). The catalysed reaction is L-glutamine + H2O = L-glutamate + NH4(+). The enzyme catalyses UTP + NH4(+) + ATP = CTP + ADP + phosphate + 2 H(+). It functions in the pathway pyrimidine metabolism; CTP biosynthesis via de novo pathway; CTP from UDP: step 2/2. Its activity is regulated as follows. Allosterically activated by GTP, when glutamine is the substrate; GTP has no effect on the reaction when ammonia is the substrate. The allosteric effector GTP functions by stabilizing the protein conformation that binds the tetrahedral intermediate(s) formed during glutamine hydrolysis. Inhibited by the product CTP, via allosteric rather than competitive inhibition. In terms of biological role, catalyzes the ATP-dependent amination of UTP to CTP with either L-glutamine or ammonia as the source of nitrogen. Regulates intracellular CTP levels through interactions with the four ribonucleotide triphosphates. This chain is CTP synthase, found in Synechococcus sp. (strain WH7803).